The primary structure comprises 333 residues: Adenosine deaminase (333 aa).

The Zn(2+) site is built by His-12 and His-14. Positions 14, 16, and 170 each coordinate substrate. His-197 contacts Zn(2+). Glu-200 (proton donor) is an active-site residue. Residue Asp-278 coordinates Zn(2+). Residue Asp-279 coordinates substrate.

It belongs to the metallo-dependent hydrolases superfamily. Adenosine and AMP deaminases family. Adenosine deaminase subfamily. Zn(2+) is required as a cofactor.

The enzyme catalyses adenosine + H2O + H(+) = inosine + NH4(+). The catalysed reaction is 2'-deoxyadenosine + H2O + H(+) = 2'-deoxyinosine + NH4(+). In terms of biological role, catalyzes the hydrolytic deamination of adenosine and 2-deoxyadenosine. The polypeptide is Adenosine deaminase (Shigella dysenteriae serotype 1 (strain Sd197)).